A 475-amino-acid chain; its full sequence is Ribulose bisphosphate carboxylase large chain (475 aa).

A propeptide spanning residues methionine 1–serine 2 is cleaved from the precursor. Position 3 is an N-acetylproline (proline 3). Residue lysine 14 is modified to N6,N6,N6-trimethyllysine. Substrate contacts are provided by asparagine 123 and threonine 173. Lysine 175 acts as the Proton acceptor in catalysis. Lysine 177 is a substrate binding site. Residues lysine 201, aspartate 203, and glutamate 204 each coordinate Mg(2+). At lysine 201 the chain carries N6-carboxylysine. The active-site Proton acceptor is the histidine 294. Residues arginine 295, histidine 327, and serine 379 each contribute to the substrate site.

The protein belongs to the RuBisCO large chain family. Type I subfamily. In terms of assembly, heterohexadecamer of 8 large chains and 8 small chains; disulfide-linked. The disulfide link is formed within the large subunit homodimers. It depends on Mg(2+) as a cofactor. Post-translationally, the disulfide bond which can form in the large chain dimeric partners within the hexadecamer appears to be associated with oxidative stress and protein turnover.

The protein resides in the plastid. It is found in the chloroplast. It carries out the reaction 2 (2R)-3-phosphoglycerate + 2 H(+) = D-ribulose 1,5-bisphosphate + CO2 + H2O. It catalyses the reaction D-ribulose 1,5-bisphosphate + O2 = 2-phosphoglycolate + (2R)-3-phosphoglycerate + 2 H(+). In terms of biological role, ruBisCO catalyzes two reactions: the carboxylation of D-ribulose 1,5-bisphosphate, the primary event in carbon dioxide fixation, as well as the oxidative fragmentation of the pentose substrate in the photorespiration process. Both reactions occur simultaneously and in competition at the same active site. The polypeptide is Ribulose bisphosphate carboxylase large chain (Tsuga heterophylla (Western hemlock)).